A 190-amino-acid polypeptide reads, in one-letter code: Large ribosomal subunit protein uL22 (190 aa).

A disordered region spans residues 111-190 (SVQSTKAKAK…TKKKTEGEEK (80 aa)). Residues 125–147 (IKSEDSKNSLKVTESKADSKVDA) are compositionally biased toward basic and acidic residues. Residues 167–178 (AKVATTKSTATR) are compositionally biased toward low complexity.

Belongs to the universal ribosomal protein uL22 family. Part of the 50S ribosomal subunit.

This protein binds specifically to 23S rRNA; its binding is stimulated by other ribosomal proteins, e.g. L4, L17, and L20. It is important during the early stages of 50S assembly. It makes multiple contacts with different domains of the 23S rRNA in the assembled 50S subunit and ribosome. In terms of biological role, the globular domain of the protein is located near the polypeptide exit tunnel on the outside of the subunit, while an extended beta-hairpin is found that lines the wall of the exit tunnel in the center of the 70S ribosome. This is Large ribosomal subunit protein uL22 from Helicobacter hepaticus (strain ATCC 51449 / 3B1).